We begin with the raw amino-acid sequence, 413 residues long: 2,3-bisphosphoglycerate-independent phosphoglycerate mutase (413 aa).

This sequence belongs to the BPG-independent phosphoglycerate mutase family. A-PGAM subfamily.

The enzyme catalyses (2R)-2-phosphoglycerate = (2R)-3-phosphoglycerate. Its pathway is carbohydrate degradation; glycolysis; pyruvate from D-glyceraldehyde 3-phosphate: step 3/5. Its function is as follows. Catalyzes the interconversion of 2-phosphoglycerate and 3-phosphoglycerate. In Sulfurisphaera tokodaii (strain DSM 16993 / JCM 10545 / NBRC 100140 / 7) (Sulfolobus tokodaii), this protein is 2,3-bisphosphoglycerate-independent phosphoglycerate mutase.